Reading from the N-terminus, the 118-residue chain is EVKLLESGGGLVQPGGSLLSCAASGFDFSRYWMSWARQAPGKGQEWIGEINPGSSTINYTPSLKDKFIISRDNAKNTLYLQMSKVRSEDTALYYCARLGYYGYFDYWGQGTTLTVSSE.

Residues Glu1 to Thr111 enclose the Ig-like domain.

The protein is Ig heavy chain V region X24 of Mus musculus (Mouse).